The following is a 320-amino-acid chain: Fructose-1,6-bisphosphatase class 1 (320 aa).

Positions 84, 103, 105, and 106 each coordinate Mg(2+). Substrate contacts are provided by residues 106-109 (DGSS), N196, and K262. E268 serves as a coordination point for Mg(2+).

The protein belongs to the FBPase class 1 family. As to quaternary structure, homotetramer. It depends on Mg(2+) as a cofactor.

It is found in the cytoplasm. It catalyses the reaction beta-D-fructose 1,6-bisphosphate + H2O = beta-D-fructose 6-phosphate + phosphate. Its pathway is carbohydrate biosynthesis; gluconeogenesis. This Shewanella amazonensis (strain ATCC BAA-1098 / SB2B) protein is Fructose-1,6-bisphosphatase class 1.